The chain runs to 935 residues: Kinesin heavy chain (935 aa).

Positions 5 to 329 constitute a Kinesin motor domain; it reads NIKVVCRFRP…LRFGARAKSI (325 aa). ATP is bound by residues 87 to 94 and 237 to 244; these read GQTGSGKT and GSEKVGKT. Positions 342 to 887 form a coiled coil; the sequence is AELKALLKKV…SQKSQNSLAA (546 aa). Disordered regions lie at residues 400–419 and 898–935; these read APGF…TPVP and RGNG…MNSR.

The protein belongs to the TRAFAC class myosin-kinesin ATPase superfamily. Kinesin family. Kinesin subfamily.

The protein localises to the cytoplasm. Its subcellular location is the cytoskeleton. Functionally, kinesin is a microtubule-associated force-producing protein that may play a role in organelle transport. Its motor activity is directed toward the microtubule's plus end. The speed of this motor is 4-5 times faster than its animal counterparts. The sequence is that of Kinesin heavy chain from Syncephalastrum racemosum (Filamentous fungus).